Reading from the N-terminus, the 2497-residue chain is Highly reducing polyketide synthase aurA (2497 aa).

The Ketosynthase family 3 (KS3) domain maps to 3–437 (PEPIAIIGSG…GTNSHAILES (435 aa)). Catalysis depends on for beta-ketoacyl synthase activity residues Cys175, His314, and His357. The segment at 575–896 (IFTGQGAQWP…ISTLSRGATG (322 aa)) is malonyl-CoA:ACP transacylase (MAT) domain. Ser669 (for malonyltransferase activity) is an active-site residue. The interval 965–1095 (HELLGDLSEE…GQLVVTWGEM (131 aa)) is N-terminal hotdog fold. The segment at 965–1255 (HELLGDLSEE…EGVHVTPLMQ (291 aa)) is dehydratase (DH) domain. One can recognise a PKS/mFAS DH domain in the interval 965 to 1259 (HELLGDLSEE…VTPLMQPTAS (295 aa)). Residue His997 is the Proton acceptor; for dehydratase activity of the active site. The interval 1110–1259 (MSVVDTDEFY…VTPLMQPTAS (150 aa)) is C-terminal hotdog fold. Asp1166 serves as the catalytic Proton donor; for dehydratase activity. Residues 1399 to 1594 (NLLTRFYDQE…TGFGGVQSIL (196 aa)) form a methyltransferase (CMet) domain region. Positions 2150–2294 (KTYLLVASRT…RRERNLVGSI (145 aa)) are ketoreductase (KR) domain. In terms of domain architecture, Carrier spans 2409–2487 (EAAELVLIAL…DLANSATSKI (79 aa)). Residue Ser2447 is modified to O-(pantetheine 4'-phosphoryl)serine.

Pantetheine 4'-phosphate is required as a cofactor.

The protein operates within polyketide biosynthesis. Highly reducing polyketide synthase (HR-PKS); part of the gene cluster that mediates the biosynthesis of aurovertins, fungal polyketides that exhibit potent inhibition of adenosine triphosphate synthase. Tha biosynthesis starts with the HR-PKS aurA that selects propionate as the starter unit; synthesizes a hexa-ene chain through the repeated functions of the KR and DH domains in the first six iterations; selectively introduces three alpha-methyl substitutions at C4, C6, and C16 using the S-adensylmethionine-dependent cMET; and shuts off KR and DH in the last three iterations to afford a 1,3,5-triketo portion that can undergo intramolecular cyclization to yield the alpha-pyrone intermediate. AurE may act as a cyclase and enhances the rate of pyrone formation and product release of aurA. The methyltransferase aurB then methylates the C17 hydroxyl group. C17 methylation is required to initiate epoxidation by the downstream monooxygenase aurC. The monooxygenase aurC and the epoxide hydrolase aurD can iteratively transform the terminal triene portion of the methylated precursor into the dioxabicyclo[3.2.1]octane scaffold of aurovertin E. Epoxidation modifications of the precursor occur in two separate steps; bis-epoxidation of the two terminal olefins takes place first, followed by another epoxidation that occurs at C7-C8 after tetrahydrofuran formation. The O-acyltransferase aurG converts aurovertin E to aurovertin A. The polypeptide is Highly reducing polyketide synthase aurA (Calcarisporium arbuscula (Dendryphion arbuscula)).